The primary structure comprises 683 residues: MAKTPPLRPHGNMAKFLAALGICSWLLVSATAHNCQHQHPKAHEVVHGVRIQLADSEDDSAGDPARHSVRRRSVAAEQPLRILLVYDESVYRLEEEKFNLINDTVLPEAVQFWEQALMVRETKGVIRLNRKCDSTQVYVKNGHTHCIDHCKATTMCGEVQVPDAHLDVCRVCNATGQNCRIDSNTQPGEGIENADFVFYVSARQTQRCFKGLTVAYAAHCQQEAALDRPIAGHANLCPESISTKPQELQTLISTVKHEILHALGFSVSLYAFFRDDDGKPRTPRKLDTGKPYLNEKLQIHQWSNETIRKVVRENWSVRGGHVNKVVDMMVTPRVIAEVRAHFNCNKLEGAELEDQGGEGTALTHWEKRILENEAMTGTHTQSPVFSRITLALMEDSGWYRANYSMATPLTWGKGLGCAFAMRSCKDWIQYNHARGRSIHPFCSKVKQDPLQTECTDDRNSVALCNLIRHEFELPKGYQNFDSLNHVKDGEEGFYGGSVSLADHCPYIQEFTWRSKNVIVRGSHCRFTENNPRPEKNFALESYGEGAKCFDHSESMWEERSCHQTREWQHWGSGCYKYDCFDGRLHILVGNYSYKCSFPGQKLSIRIAANGWLHKGAIMCPPCHELCGAQFAAQGKQCRPGEEPDPLNKYPRDNLACGAGSEKSRSVAIITAVLLLFGLRWGFS.

Residue histidine 257 participates in Zn(2+) binding. The active site involves glutamate 258. Residues histidine 261 and histidine 364 each contribute to the Zn(2+) site.

Belongs to the peptidase M8 family. It depends on Zn(2+) as a cofactor.

The protein resides in the cytoplasm. In terms of biological role, essential for the coordination of mitotic progression, and also plays a role in cell migration. The protein is Leishmanolysin-like peptidase (Invadolysin) of Drosophila melanogaster (Fruit fly).